We begin with the raw amino-acid sequence, 503 residues long: ATP synthase subunit beta (503 aa).

Residue 157 to 164 (GGAGVGKT) participates in ATP binding.

The protein belongs to the ATPase alpha/beta chains family. As to quaternary structure, F-type ATPases have 2 components, CF(1) - the catalytic core - and CF(0) - the membrane proton channel. CF(1) has five subunits: alpha(3), beta(3), gamma(1), delta(1), epsilon(1). CF(0) has three main subunits: a(1), b(2) and c(9-12). The alpha and beta chains form an alternating ring which encloses part of the gamma chain. CF(1) is attached to CF(0) by a central stalk formed by the gamma and epsilon chains, while a peripheral stalk is formed by the delta and b chains.

The protein resides in the cell inner membrane. The catalysed reaction is ATP + H2O + 4 H(+)(in) = ADP + phosphate + 5 H(+)(out). Its function is as follows. Produces ATP from ADP in the presence of a proton gradient across the membrane. The catalytic sites are hosted primarily by the beta subunits. The protein is ATP synthase subunit beta of Flavobacterium psychrophilum (strain ATCC 49511 / DSM 21280 / CIP 103535 / JIP02/86).